The following is a 663-amino-acid chain: Transcriptional repressor CTCFL (663 aa).

The segment covering 24–51 (EKGLKEEEKDGVCREKDHRSPSELEAER) has biased composition (basic and acidic residues). Disordered regions lie at residues 24–55 (EKGL…TSGA) and 221–250 (NSNV…QRKT). 10 consecutive C2H2-type zinc fingers follow at residues 257-279 (FHCD…MKTH), 285-307 (HLCH…VNTH), 313-336 (YKCN…RYKH), 342-364 (FKCS…VRSH), 370-392 (FQCC…MRTH), 398-421 (YECH…LQKH), 428-451 (YQCP…RNLH), 458-480 (LKCR…QKTH), 486-508 (FKCK…IRTH), and 514-537 (FTCL…RKYH). The C2H2-type 11; atypical zinc-finger motif lies at 546–568 (YKCSKCGKGFSRWINLHRHSEKC). Residues 569 to 630 (GSGEAKSAAS…STTKGEQFPG (62 aa)) form a disordered region. Basic residues predominate over residues 580–590 (KGRRTRKRKQT). Positions 594–607 (EATKGQKEAAKGWK) are enriched in basic and acidic residues. Residues 608–620 (EAANGDEAAAEEA) are compositionally biased toward low complexity.

Belongs to the CTCF zinc-finger protein family. Interacts with histones, PRMT7 and SETD1A. Interacts (via N-terminus) with BAG6/BAT3. Testis specific. Specifically expressed in primary spermatocytes.

It is found in the cytoplasm. It localises to the nucleus. Its function is as follows. Testis-specific DNA binding protein responsible for insulator function, nuclear architecture and transcriptional control, which probably acts by recruiting epigenetic chromatin modifiers. Plays a key role in gene imprinting in male germline, by participating in the establishment of differential methylation at the IGF2/H19 imprinted control region (ICR). Directly binds the unmethylated H19 ICR and recruits the PRMT7 methyltransferase, leading to methylate histone H4 'Arg-3' to form H4R3sme2. This probably leads to recruit de novo DNA methyltransferases at these sites. Seems to act as tumor suppressor. In association with DNMT1 and DNMT3B, involved in activation of BAG1 gene expression by binding to its promoter. Required for dimethylation of H3 lysine 4 (H3K4me2) of MYC and BRCA1 promoters. In Homo sapiens (Human), this protein is Transcriptional repressor CTCFL (CTCFL).